The following is a 162-amino-acid chain: Lipoprotein signal peptidase (162 aa).

4 consecutive transmembrane segments (helical) span residues 12–32 (WFAL…YFNS), 42–62 (VVEG…FSFL), 66–86 (GGWQ…WLGW), and 93–113 (FSGL…GNVI). Residues D123 and D142 contribute to the active site. A helical transmembrane segment spans residues 133-153 (WYYPAFNLADSFICVGAALMV).

It belongs to the peptidase A8 family.

Its subcellular location is the cell inner membrane. The catalysed reaction is Release of signal peptides from bacterial membrane prolipoproteins. Hydrolyzes -Xaa-Yaa-Zaa-|-(S,diacylglyceryl)Cys-, in which Xaa is hydrophobic (preferably Leu), and Yaa (Ala or Ser) and Zaa (Gly or Ala) have small, neutral side chains.. It participates in protein modification; lipoprotein biosynthesis (signal peptide cleavage). Its function is as follows. This protein specifically catalyzes the removal of signal peptides from prolipoproteins. This Chromobacterium violaceum (strain ATCC 12472 / DSM 30191 / JCM 1249 / CCUG 213 / NBRC 12614 / NCIMB 9131 / NCTC 9757 / MK) protein is Lipoprotein signal peptidase.